The sequence spans 258 residues: NAD-dependent protein deacylase (258 aa).

A Deacetylase sirtuin-type domain is found at 3-258 (ERQLEKSIEH…LPALMRGLSA (256 aa)). Residue 28-48 (GAGMSADSGLETYRDDKTGLW) coordinates NAD(+). Tyr73 and Arg76 together coordinate substrate. Position 109–112 (109–112 (QNID)) interacts with NAD(+). The active-site Proton acceptor is the His127. Cys135, Cys138, Cys161, and Cys164 together coordinate Zn(2+). NAD(+) is bound by residues 201–203 (GTS) and Ala245.

Belongs to the sirtuin family. Class III subfamily. Zn(2+) serves as cofactor.

Its subcellular location is the cytoplasm. The catalysed reaction is N(6)-acetyl-L-lysyl-[protein] + NAD(+) + H2O = 2''-O-acetyl-ADP-D-ribose + nicotinamide + L-lysyl-[protein]. It catalyses the reaction N(6)-succinyl-L-lysyl-[protein] + NAD(+) + H2O = 2''-O-succinyl-ADP-D-ribose + nicotinamide + L-lysyl-[protein]. In terms of biological role, NAD-dependent lysine deacetylase and desuccinylase that specifically removes acetyl and succinyl groups on target proteins. Modulates the activities of several proteins which are inactive in their acylated form. This chain is NAD-dependent protein deacylase, found in Corynebacterium glutamicum (strain ATCC 13032 / DSM 20300 / JCM 1318 / BCRC 11384 / CCUG 27702 / LMG 3730 / NBRC 12168 / NCIMB 10025 / NRRL B-2784 / 534).